Consider the following 343-residue polypeptide: Low conductance mechanosensitive channel YnaI (343 aa).

At Met1–Asn9 the chain is on the periplasmic side. Residues Ala10–Phe30 traverse the membrane as a helical segment. Over Arg31–Phe40 the chain is Cytoplasmic. A helical transmembrane segment spans residues Leu41–Ile61. Residues Asn62–Val77 are Periplasmic-facing. Residues Ile78 to Ile98 form a helical membrane-spanning segment. At Asn99–Thr125 the chain is on the cytoplasmic side. The chain crosses the membrane as a helical span at residues Ile126 to Leu146. Residue Thr147 is a topological domain, periplasmic. A helical transmembrane segment spans residues Phe148–Phe168. Residues Ser169–Arg343 lie on the Cytoplasmic side of the membrane.

The protein belongs to the MscS (TC 1.A.23) family. In terms of assembly, homoheptamer.

The protein resides in the cell inner membrane. Its function is as follows. Mechanosensitive channel that protects cells against hypoosmotic stress when highly overexpressed. This Escherichia coli (strain K12) protein is Low conductance mechanosensitive channel YnaI (ynaI).